The sequence spans 389 residues: Chalcone synthase 2 (389 aa).

The active site involves C164.

It belongs to the thiolase-like superfamily. Chalcone/stilbene synthases family.

It catalyses the reaction (E)-4-coumaroyl-CoA + 3 malonyl-CoA + 3 H(+) = 2',4,4',6'-tetrahydroxychalcone + 3 CO2 + 4 CoA. The protein operates within secondary metabolite biosynthesis; flavonoid biosynthesis. In terms of biological role, the primary product of this enzyme is 4,2',4',6'-tetrahydroxychalcone (also termed naringenin-chalcone or chalcone) which can under specific conditions spontaneously isomerize into naringenin. The protein is Chalcone synthase 2 (CHS2) of Trifolium subterraneum (Subterranean clover).